The following is a 196-amino-acid chain: Elongation factor Ts (196 aa).

Residues 80–83 form an involved in Mg(2+) ion dislocation from EF-Tu region; the sequence is TDFV.

The protein belongs to the EF-Ts family.

The protein resides in the cytoplasm. Its function is as follows. Associates with the EF-Tu.GDP complex and induces the exchange of GDP to GTP. It remains bound to the aminoacyl-tRNA.EF-Tu.GTP complex up to the GTP hydrolysis stage on the ribosome. This chain is Elongation factor Ts, found in Thermosipho melanesiensis (strain DSM 12029 / CIP 104789 / BI429).